The sequence spans 358 residues: MENKATLARNIGEKRVSPRSKVNGTGKSWRISYSPQRMDGVSSGRNVSKIPSPVRERLFLKNQERKPLGVSPLSNLSPNSLGRNSLEKSTYNNKLSLKDFEVGRKLGKGKFGKVYCVRHKKSGFICALKAIEKNEILQFNLLKQLKREVDIQLGMDHPNIIKLYAHFHDEKRVYLLMEHSINGELYKSLKNNGPFNDVLASHYIYQIADALHYMHKKRIIHRDVKPENVLIGFDNVVKLADFGWSILNPEGSKRKTLCGTIDYLSPEMITPREYDEQVDVWALGVLAYELVVGVPPFEENSKELTYKRILKCDLNFPESISKDAKDLISKLLVTDTTQRLSLTGVKTHPWILKNKPFW.

Positions 1-49 (MENKATLARNIGEKRVSPRSKVNGTGKSWRISYSPQRMDGVSSGRNVSK) are disordered. The segment covering 20 to 35 (SKVNGTGKSWRISYSP) has biased composition (polar residues). One can recognise a Protein kinase domain in the interval 100–358 (FEVGRKLGKG…PWILKNKPFW (259 aa)). Residues 106-114 (LGKGKFGKV) and Lys-129 each bind ATP. Residue Asp-223 is the Proton acceptor of the active site.

The protein belongs to the protein kinase superfamily. Ser/Thr protein kinase family. Aurora subfamily.

It localises to the nucleus. It is found in the cytoplasm. The protein localises to the cytoskeleton. Its subcellular location is the spindle. The protein resides in the chromosome. It localises to the centromere. It is found in the kinetochore. The catalysed reaction is L-seryl-[protein] + ATP = O-phospho-L-seryl-[protein] + ADP + H(+). It catalyses the reaction L-threonyl-[protein] + ATP = O-phospho-L-threonyl-[protein] + ADP + H(+). Its function is as follows. Component of the chromosomal passenger complex (CPC), a complex that acts as a key regulator of chromosome segregation and cytokinesis. Has a role in error-correction of aberrent kinetochore-microtubule attachments to ensure that sister kinetochores become bioriented and connect to opposite poles by promoting spindle assembly checkpoint signaling. The sequence is that of Aurora kinase (IPL1) from Candida glabrata (strain ATCC 2001 / BCRC 20586 / JCM 3761 / NBRC 0622 / NRRL Y-65 / CBS 138) (Yeast).